Here is an 846-residue protein sequence, read N- to C-terminus: Matrin-3 (846 aa).

Residue serine 2 is modified to N-acetylserine. Position 3 is an N6-acetyllysine; alternate (lysine 3). A Glycyl lysine isopeptide (Lys-Gly) (interchain with G-Cter in SUMO2); alternate cross-link involves residue lysine 3. Residues serine 4, serine 9, serine 14, serine 22, serine 41, serine 118, and serine 126 each carry the phosphoserine modification. Glycyl lysine isopeptide (Lys-Gly) (interchain with G-Cter in SUMO2) cross-links involve residues lysine 132 and lysine 146. Disordered regions lie at residues 147–174 (RRRT…YRVP) and 187–213 (DSFD…ESGY). Position 150 is a phosphothreonine (threonine 150). Residue serine 157 is modified to Phosphoserine. The residue at position 158 (tyrosine 158) is a Phosphotyrosine. Positions 160 to 174 (RDGRSATREPPYRVP) are enriched in basic and acidic residues. Serine 164, serine 188, and serine 195 each carry phosphoserine. The span at 201–213 (DYDHGSRSQESGY) shows a compositional bias: basic and acidic residues. At tyrosine 202 the chain carries Phosphotyrosine. Residues serine 206, serine 208, and serine 211 each carry the phosphoserine modification. Position 219 is a phosphotyrosine (tyrosine 219). Phosphoserine is present on serine 234. Lysine 245 participates in a covalent cross-link: Glycyl lysine isopeptide (Lys-Gly) (interchain with G-Cter in SUMO2). Phosphoserine is present on serine 264. A Glycyl lysine isopeptide (Lys-Gly) (interchain with G-Cter in SUMO2) cross-link involves residue lysine 269. Serine 275 carries the post-translational modification Phosphoserine. The tract at residues 342–394 (PFMLQQSTNPAPGILGPPPPSFHLGGPAVGPRGNLGAGNGNLQGPRHMQKGRV) is disordered. Positions 398-473 (RVVHIMDFQR…KPVRVHLSQK (76 aa)) constitute an RRM 1 domain. Residues lysine 478, lysine 487, and lysine 491 each participate in a glycyl lysine isopeptide (Lys-Gly) (interchain with G-Cter in SUMO2) cross-link. The RRM 2 domain occupies 496 to 571 (RVIHLSNLPH…RCVKVDLSEK (76 aa)). 2 positions are modified to phosphoserine: serine 509 and serine 511. Lysine 515 participates in a covalent cross-link: Glycyl lysine isopeptide (Lys-Gly) (interchain with G-Cter in SUMO2). N6-acetyllysine; alternate is present on lysine 522. Lysine 522 is covalently cross-linked (Glycyl lysine isopeptide (Lys-Gly) (interchain with G-Cter in SUMO2); alternate). Phosphoserine is present on serine 533. Glycyl lysine isopeptide (Lys-Gly) (interchain with G-Cter in SUMO2) cross-links involve residues lysine 554 and lysine 555. At lysine 571 the chain carries N6-acetyllysine. Residues 588 to 779 (KKDKSRKRSY…EDYTIPDEYR (192 aa)) form a disordered region. 4 positions are modified to phosphoserine: serine 596, serine 598, serine 604, and serine 606. Basic and acidic residues predominate over residues 600-642 (DGKESPSDKKSKTDAQKTESPAEGKEQEEKSGEDGEKDTKDDQ). Glycyl lysine isopeptide (Lys-Gly) (interchain with G-Cter in SUMO2) cross-links involve residues lysine 616 and lysine 629. The segment covering 652–664 (ESEDELLVDEEEA) has biased composition (acidic residues). Phosphoserine is present on residues serine 653, serine 670, serine 672, and serine 673. The segment covering 665–675 (AALLESGSSVG) has biased composition (low complexity). Threonine 678 is subject to Phosphothreonine. Residue serine 688 is modified to Phosphoserine. Residues 688–703 (SDGKKEPSDKAVKKDP) show a composition bias toward basic and acidic residues. Positions 709–717 (SKKKLKKVD) match the Nuclear localization signal motif. Residues lysine 718 and lysine 735 each participate in a glycyl lysine isopeptide (Lys-Gly) (interchain with G-Cter in SUMO2) cross-link. Threonine 740 carries the post-translational modification Phosphothreonine. Residues serine 746 and serine 758 each carry the phosphoserine modification. Over residues 766 to 779 (DENKEDYTIPDEYR) the composition is skewed to basic and acidic residues. Lysine 769 participates in a covalent cross-link: Glycyl lysine isopeptide (Lys-Gly) (interchain with G-Cter in SUMO2). The Matrin-type zinc finger occupies 800–831 (FYCKLCSLFYTNEEVAKNTHCSSLPHYQKLKK). An N6-acetyllysine; alternate modification is found at lysine 835. Lysine 835 participates in a covalent cross-link: Glycyl lysine isopeptide (Lys-Gly) (interchain with G-Cter in SUMO2); alternate.

Part of a complex consisting of SFPQ, NONO and MATR3. Interacts with AGO1 and AGO2. Part of a complex composed at least of ASH2L, EMSY, HCFC1, HSPA8, CCAR2, MATR3, MKI67, RBBP5, TUBB2A, WDR5 and ZNF335; this complex may have a histone H3-specific methyltransferase activity. Interacts with TARDBP. Part of the HDP-RNP complex composed of at least HEXIM1, PRKDC, XRCC5, XRCC6, paraspeckle proteins (SFPQ, NONO, PSPC1, RBM14, and MATR3) and NEAT1 RNA. Interacts with FUS. Interacts with IGF2BP1. Interacts with IGF2BP2 and IGF2BP3. Interacts with RBPMS.

It is found in the nucleus matrix. In terms of biological role, may play a role in transcription or may interact with other nuclear matrix proteins to form the internal fibrogranular network. In association with the SFPQ-NONO heteromer may play a role in nuclear retention of defective RNAs. Plays a role in the regulation of DNA virus-mediated innate immune response by assembling into the HDP-RNP complex, a complex that serves as a platform for IRF3 phosphorylation and subsequent innate immune response activation through the cGAS-STING pathway. Binds to N6-methyladenosine (m6A)-containing mRNAs and contributes to MYC stability by binding to m6A-containing MYC mRNAs. May bind to specific miRNA hairpins. This Mus musculus (Mouse) protein is Matrin-3 (Matr3).